Reading from the N-terminus, the 183-residue chain is Adenine phosphoribosyltransferase (183 aa).

Belongs to the purine/pyrimidine phosphoribosyltransferase family. In terms of assembly, homodimer.

The protein resides in the cytoplasm. It carries out the reaction AMP + diphosphate = 5-phospho-alpha-D-ribose 1-diphosphate + adenine. The protein operates within purine metabolism; AMP biosynthesis via salvage pathway; AMP from adenine: step 1/1. Catalyzes a salvage reaction resulting in the formation of AMP, that is energically less costly than de novo synthesis. This Klebsiella pneumoniae (strain 342) protein is Adenine phosphoribosyltransferase.